The following is a 352-amino-acid chain: UDP-N-acetylglucosamine--N-acetylmuramyl-(pentapeptide) pyrophosphoryl-undecaprenol N-acetylglucosamine transferase (352 aa).

UDP-N-acetyl-alpha-D-glucosamine is bound by residues S195 and Q287.

It belongs to the glycosyltransferase 28 family. MurG subfamily.

It localises to the cell membrane. It carries out the reaction Mur2Ac(oyl-L-Ala-gamma-D-Glu-L-Lys-D-Ala-D-Ala)-di-trans,octa-cis-undecaprenyl diphosphate + UDP-N-acetyl-alpha-D-glucosamine = beta-D-GlcNAc-(1-&gt;4)-Mur2Ac(oyl-L-Ala-gamma-D-Glu-L-Lys-D-Ala-D-Ala)-di-trans,octa-cis-undecaprenyl diphosphate + UDP + H(+). It participates in cell wall biogenesis; peptidoglycan biosynthesis. Its function is as follows. Cell wall formation. Catalyzes the transfer of a GlcNAc subunit on undecaprenyl-pyrophosphoryl-MurNAc-pentapeptide (lipid intermediate I) to form undecaprenyl-pyrophosphoryl-MurNAc-(pentapeptide)GlcNAc (lipid intermediate II). The sequence is that of UDP-N-acetylglucosamine--N-acetylmuramyl-(pentapeptide) pyrophosphoryl-undecaprenol N-acetylglucosamine transferase from Streptococcus pneumoniae serotype 4 (strain ATCC BAA-334 / TIGR4).